The following is a 374-amino-acid chain: Protein A6 homolog (374 aa).

Belongs to the chordopoxvirinae A6 family.

Its subcellular location is the virion. Its function is as follows. Plays an essential role in immature virion (IV) to mature virion (MV) transition. The chain is Protein A6 homolog from Vertebrata (FPV).